A 154-amino-acid chain; its full sequence is Ribosome maturation factor RimP (154 aa).

It belongs to the RimP family.

It is found in the cytoplasm. Required for maturation of 30S ribosomal subunits. This Haemophilus ducreyi (strain 35000HP / ATCC 700724) protein is Ribosome maturation factor RimP.